A 173-amino-acid chain; its full sequence is Small ribosomal subunit protein uS7 (173 aa).

It belongs to the universal ribosomal protein uS7 family. In terms of assembly, part of the 30S ribosomal subunit. Contacts proteins S9 and S11.

Its function is as follows. One of the primary rRNA binding proteins, it binds directly to 16S rRNA where it nucleates assembly of the head domain of the 30S subunit. Is located at the subunit interface close to the decoding center, probably blocks exit of the E-site tRNA. This Orientia tsutsugamushi (strain Ikeda) (Rickettsia tsutsugamushi) protein is Small ribosomal subunit protein uS7.